We begin with the raw amino-acid sequence, 127 residues long: Large-conductance mechanosensitive channel (127 aa).

The next 3 helical transmembrane spans lie at 9-29, 32-52, and 75-95; these read EFAM…GVAF, IVTA…LGGV, and VIDF…INLL.

The protein belongs to the MscL family. Homopentamer.

Its subcellular location is the cell inner membrane. Channel that opens in response to stretch forces in the membrane lipid bilayer. May participate in the regulation of osmotic pressure changes within the cell. This Legionella pneumophila (strain Corby) protein is Large-conductance mechanosensitive channel.